The sequence spans 440 residues: Probable cytosolic iron-sulfur protein assembly protein 1 (440 aa).

7 WD repeats span residues 12–51 (AHAEPAWTVSFNPTRSLLASCSTDRTIRLYSYIIPSSSDG), 71–110 (DHKRTVRSIAWSPDGRTLASGSFDSTVGVWEEVIPLSDDE), 148–187 (GHESECKSVGFSSDGALLASCSRDKSVWVWEVQPDADFEC), 193–233 (EHSQ…WCIF), 278–317 (EEDETVWCLAWSPDGRWLASGGDNGGIRLWQRTGSQPDSA), 326–379 (AHSR…SPSS), and 401–440 (HGVNDINSVAWCVREDKKGWGMLSSAGDDGSVKVWRVVRD). The span at 107-116 (SDDEEEEDEG) shows a compositional bias: acidic residues. A disordered region spans residues 107–137 (SDDEEEEDEGAQGVYKPAGVDSDGDGDGGKE).

Belongs to the WD repeat CIA1 family.

Its function is as follows. Essential component of the cytosolic iron-sulfur (Fe/S) protein assembly machinery. Required for the maturation of extramitochondrial Fe/S proteins. This chain is Probable cytosolic iron-sulfur protein assembly protein 1, found in Cryptococcus neoformans var. neoformans serotype D (strain B-3501A) (Filobasidiella neoformans).